Consider the following 104-residue polypeptide: Large ribosomal subunit protein bL21c (104 aa).

This sequence belongs to the bacterial ribosomal protein bL21 family. In terms of assembly, part of the 50S ribosomal subunit.

The protein resides in the plastid. Its subcellular location is the chloroplast. In terms of biological role, this protein binds to 23S rRNA. The chain is Large ribosomal subunit protein bL21c from Guillardia theta (Cryptophyte).